Here is a 144-residue protein sequence, read N- to C-terminus: Group IID secretory phospholipase A2 (144 aa).

The first 19 residues, 1 to 19, serve as a signal peptide directing secretion; it reads MRLALLCGLLLAGITATQG. Cystine bridges form between Cys-45-Cys-137, Cys-47-Cys-63, Cys-62-Cys-117, Cys-68-Cys-144, Cys-69-Cys-110, Cys-78-Cys-103, and Cys-96-Cys-108. 3 residues coordinate Ca(2+): His-46, Gly-48, and Gly-50. The active site involves His-66. Residue Asp-67 participates in Ca(2+) binding. N-linked (GlcNAc...) asparagine glycosylation occurs at Asn-99. The active site involves Asp-111.

The protein belongs to the phospholipase A2 family. The cofactor is Ca(2+). Highly expressed in secondary lymphoid tissues, spleen and lymph nodes. Expressed at a lesser extent in thymus. Expressed in CD4-positive, IL2RA/CD25-positive, FOXP3-positive Tregs (at protein level). Expressed in myeloid cell subsets resident in spleen and lymph nodes, ITGAX/CD11C-positive dendritic cells and macrophages (at protein level). Enriched in CD4-positive, ITGAM/CD11B-positive dendritic cell subset. Expressed in pulmonary ITGAX/CD11C-positive dendritic cell subset (at protein level).

It is found in the secreted. The protein resides in the cell membrane. Its subcellular location is the cytoplasm. The enzyme catalyses a 1,2-diacyl-sn-glycero-3-phosphoethanolamine + H2O = a 1-acyl-sn-glycero-3-phosphoethanolamine + a fatty acid + H(+). The catalysed reaction is 1-hexadecanoyl-2-(9Z-octadecenoyl)-sn-glycero-3-phosphoethanolamine + H2O = 1-hexadecanoyl-sn-glycero-3-phosphoethanolamine + (9Z)-octadecenoate + H(+). It catalyses the reaction 1-hexadecanoyl-2-(9Z,12Z-octadecadienoyl)-sn-glycero-3-phosphoethanolamine + H2O = 1-hexadecanoyl-sn-glycero-3-phosphoethanolamine + (9Z,12Z)-octadecadienoate + H(+). It carries out the reaction 1,2-dihexadecanoyl-sn-glycero-3-phospho-(1'-sn-glycerol) + H2O = 1-hexadecanoyl-sn-glycero-3-phospho-(1'-sn-glycerol) + hexadecanoate + H(+). The enzyme catalyses 1-hexadecanoyl-2-(9Z-octadecenoyl)-sn-glycero-3-phospho-(1'-sn-glycerol) + H2O = 1-hexadecanoyl-sn-glycero-3-phospho-(1'-sn-glycerol) + (9Z)-octadecenoate + H(+). The catalysed reaction is a 1,2-diacyl-sn-glycero-3-phosphocholine + H2O = a 1-acyl-sn-glycero-3-phosphocholine + a fatty acid + H(+). It catalyses the reaction 1,2-dihexadecanoyl-sn-glycero-3-phosphocholine + H2O = 1-hexadecanoyl-sn-glycero-3-phosphocholine + hexadecanoate + H(+). It carries out the reaction 1-hexadecanoyl-2-(9Z-octadecenoyl)-sn-glycero-3-phosphocholine + H2O = 1-hexadecanoyl-sn-glycero-3-phosphocholine + (9Z)-octadecenoate + H(+). The enzyme catalyses 1-hexadecanoyl-2-(9Z,12Z-octadecadienoyl)-sn-glycero-3-phosphocholine + H2O = (9Z,12Z)-octadecadienoate + 1-hexadecanoyl-sn-glycero-3-phosphocholine + H(+). The catalysed reaction is 1-hexadecanoyl-2-(4Z,7Z,10Z,13Z,16Z,19Z-docosahexaenoyl)-sn-glycero-3-phosphocholine + H2O = (4Z,7Z,10Z,13Z,16Z,19Z)-docosahexaenoate + 1-hexadecanoyl-sn-glycero-3-phosphocholine + H(+). Secretory calcium-dependent phospholipase A2 that primarily targets extracellular lipids, exerting anti-inflammatory and immunosuppressive functions. Hydrolyzes the ester bond of the fatty acyl group attached at sn-2 position of phospholipids (phospholipase A2 activity) with preference for phosphatidylethanolamines and phosphatidylglycerols over phosphatidylcholines. In draining lymph nodes, selectively hydrolyzes diacyl and alkenyl forms of phosphatidylethanolamines, releasing omega-3 polyunsaturated fatty acids (PUFAs) such as eicosapentaenoate and docosahexaenoate that are precursors of the anti-inflammatory lipid mediators, resolvins. During the resolution phase of acute inflammation drives docosahexaenoate-derived resolvin D1 synthesis, which suppresses dendritic cell activation and T-helper 1 immune response. May act in an autocrine and paracrine manner. Via a mechanism independent of its catalytic activity, promotes differentiation of regulatory T cells (Tregs) and participates in the maintenance of immune tolerance. May contribute to lipid remodeling of cellular membranes and generation of lipid mediators involved in pathogen clearance. Displays bactericidal activity against Gram-positive bacteria by directly hydrolyzing phospholipids of the bacterial membrane. The sequence is that of Group IID secretory phospholipase A2 (Pla2g2d) from Mus musculus (Mouse).